We begin with the raw amino-acid sequence, 532 residues long: Muscarinic acetylcholine receptor M5 (532 aa).

Over M1–E29 the chain is Extracellular. N8 is a glycosylation site (N-linked (GlcNAc...) asparagine). A helical membrane pass occupies residues V30–I53. The Cytoplasmic portion of the chain corresponds to S54–N66. A helical membrane pass occupies residues Y67 to Y87. Residues T88 to D104 lie on the Extracellular side of the membrane. The chain crosses the membrane as a helical span at residues L105–F126. At D127–R146 the chain is on the cytoplasmic side. A helical transmembrane segment spans residues A147–W169. Residues Q170–P191 are Extracellular-facing. The helical transmembrane segment at T192–C214 threads the bilayer. Residues R215 to T443 are Cytoplasmic-facing. The segment at Q263–W294 is disordered. The span at S270–S279 shows a compositional bias: low complexity. Residues I280–W294 are compositionally biased toward polar residues. Residues L444–V464 traverse the membrane as a helical segment. Residues S465–H478 lie on the Extracellular side of the membrane. A helical transmembrane segment spans residues L479 to C498. Topologically, residues N499–P532 are cytoplasmic. Phosphothreonine occurs at positions 501 and 505.

It belongs to the G-protein coupled receptor 1 family. Muscarinic acetylcholine receptor subfamily. CHRM5 sub-subfamily.

Its subcellular location is the cell membrane. It localises to the postsynaptic cell membrane. In terms of biological role, the muscarinic acetylcholine receptor mediates various cellular responses, including inhibition of adenylate cyclase, breakdown of phosphoinositides and modulation of potassium channels through the action of G proteins. Primary transducing effect is Pi turnover. This is Muscarinic acetylcholine receptor M5 (CHRM5) from Saimiri boliviensis boliviensis (Bolivian squirrel monkey).